We begin with the raw amino-acid sequence, 593 residues long: NADH-quinone oxidoreductase subunit C/D (593 aa).

The NADH dehydrogenase I subunit C stretch occupies residues 1 to 184 (MTADNAIFIP…DPYSLTLAKQ (184 aa)). The segment at 208 to 593 (DYMFLNLGPN…IDFVMADVDR (386 aa)) is NADH dehydrogenase I subunit D.

This sequence in the N-terminal section; belongs to the complex I 30 kDa subunit family. The protein in the C-terminal section; belongs to the complex I 49 kDa subunit family. As to quaternary structure, NDH-1 is composed of 13 different subunits. Subunits NuoB, CD, E, F, and G constitute the peripheral sector of the complex.

The protein localises to the cell inner membrane. The catalysed reaction is a quinone + NADH + 5 H(+)(in) = a quinol + NAD(+) + 4 H(+)(out). NDH-1 shuttles electrons from NADH, via FMN and iron-sulfur (Fe-S) centers, to quinones in the respiratory chain. The immediate electron acceptor for the enzyme in this species is believed to be ubiquinone. Couples the redox reaction to proton translocation (for every two electrons transferred, four hydrogen ions are translocated across the cytoplasmic membrane), and thus conserves the redox energy in a proton gradient. This chain is NADH-quinone oxidoreductase subunit C/D, found in Pseudomonas putida (strain W619).